The chain runs to 391 residues: Mannose-6-phosphate isomerase (391 aa).

Residues Q97, H99, E134, and H255 each coordinate Zn(2+). R274 is an active-site residue. K280 carries the post-translational modification N6-acetyllysine.

The protein belongs to the mannose-6-phosphate isomerase type 1 family. It depends on Zn(2+) as a cofactor.

The protein resides in the cytoplasm. The catalysed reaction is D-mannose 6-phosphate = D-fructose 6-phosphate. Involved in the conversion of glucose to GDP-L-fucose, which can be converted to L-fucose, a capsular polysaccharide. This chain is Mannose-6-phosphate isomerase (manA), found in Shigella flexneri.